The following is a 217-amino-acid chain: Octanoyltransferase (217 aa).

One can recognise a BPL/LPL catalytic domain in the interval 32–207 (SESHDELWIV…TFSQLLGYQH (176 aa)). Substrate is bound by residues 71 to 78 (RGGQVTYH), 138 to 140 (SLG), and 151 to 153 (GLA). The active-site Acyl-thioester intermediate is Cys169.

This sequence belongs to the LipB family.

It localises to the cytoplasm. It catalyses the reaction octanoyl-[ACP] + L-lysyl-[protein] = N(6)-octanoyl-L-lysyl-[protein] + holo-[ACP] + H(+). It participates in protein modification; protein lipoylation via endogenous pathway; protein N(6)-(lipoyl)lysine from octanoyl-[acyl-carrier-protein]: step 1/2. Catalyzes the transfer of endogenously produced octanoic acid from octanoyl-acyl-carrier-protein onto the lipoyl domains of lipoate-dependent enzymes. Lipoyl-ACP can also act as a substrate although octanoyl-ACP is likely to be the physiological substrate. This Shewanella baltica (strain OS155 / ATCC BAA-1091) protein is Octanoyltransferase.